The primary structure comprises 315 residues: Intradiol ring-cleavage dioxygenase prcA (315 aa).

Positions 166, 200, 224, and 226 each coordinate Fe cation. The disordered stretch occupies residues 287-315 (KKHHPNPNSAPPVSSFERFNKASKTQEKL). Basic and acidic residues predominate over residues 304–315 (RFNKASKTQEKL).

The protein belongs to the intradiol ring-cleavage dioxygenase family. As to quaternary structure, homodimer. Fe(3+) is required as a cofactor.

It carries out the reaction 3,4-dihydroxybenzoate + O2 = 3-carboxy-cis,cis-muconate + 2 H(+). In terms of biological role, intradiol ring-cleavage dioxygenase; part of the benzoic acid degradation pathway also known as the protocatechuic acid pathway. Benzoic acid debradation begins with the conversion of benzoic acid into 4-hydroxybenzoic acid through hydroxylation by the benzoate-4-monooxygenase bphA, and its partner NADPH-cytochrome P450 reductase cprA which act as a mediator in electron donation from NADPH. 4-Hydroxybenzoic acid is then converted into 3,4-dihydroxybenzoic acid (also called protocatechuic acid) by the p-hydroxybenzoate-m-hydroxylase phhA. Protocatechuic acid is converted into 3-carboxy-cis,cis-muconic acid by the intradiol ring-cleavage dioxygenase prcA, which is further metabolized through the 3-oxoadipate pathway to finally enter the tricarboxylic acid cycle (TCA). The chain is Intradiol ring-cleavage dioxygenase prcA from Aspergillus niger (strain ATCC MYA-4892 / CBS 513.88 / FGSC A1513).